We begin with the raw amino-acid sequence, 447 residues long: N-succinylarginine dihydrolase (447 aa).

Residues 19–28 (GGLAVGNIAS), asparagine 110, and 137–138 (HR) contribute to the substrate site. Residue glutamate 174 is part of the active site. Arginine 213 serves as a coordination point for substrate. The active site involves histidine 249. Aspartate 251 and asparagine 362 together coordinate substrate. The active-site Nucleophile is the cysteine 368.

Belongs to the succinylarginine dihydrolase family. As to quaternary structure, homodimer.

The enzyme catalyses N(2)-succinyl-L-arginine + 2 H2O + 2 H(+) = N(2)-succinyl-L-ornithine + 2 NH4(+) + CO2. The protein operates within amino-acid degradation; L-arginine degradation via AST pathway; L-glutamate and succinate from L-arginine: step 2/5. Its function is as follows. Catalyzes the hydrolysis of N(2)-succinylarginine into N(2)-succinylornithine, ammonia and CO(2). This chain is N-succinylarginine dihydrolase, found in Nitrosospira multiformis (strain ATCC 25196 / NCIMB 11849 / C 71).